Consider the following 414-residue polypeptide: Ciliary microtubule-associated protein 2 (414 aa).

The protein is Ciliary microtubule-associated protein 2 (Cimap2) of Mus musculus (Mouse).